A 507-amino-acid chain; its full sequence is E3 ubiquitin-protein ligase makorin-3 (507 aa).

A compositionally biased stretch (low complexity) spans 1-21 (MEEPAAPSEAHEAAGAQAGAE). 2 disordered regions span residues 1–48 (MEEP…DSAL) and 69–89 (RGGLRPAPASGGGAWPSPLPS). The C3H1-type 1 zinc finger occupies 95-122 (WTKQIICRYYIHGQCKEGENCRYSHDLS). Residues 126-149 (MATEGGVSPPGASAGGGPSTAAHI) form a disordered region. Residues 238–265 (GSGLRFCYYASRGVCFRGESCMYLHGDI) form a C3H1-type 2 zinc finger. A makorin-type Cys-His region spans residues 266–293 (CDMCGLQTLHPMDAAQREEHMRACIEAH). The RING-type zinc-finger motif lies at 311–365 (CGICMEVVYEKANPNDRRFGILSNCNHSFCIRCIRRWRSARQFENRIVKSCPQCR). A C3H1-type 3 zinc finger spans residues 394–423 (AMSNKACRYFAEGRGNCPFGDTCFYKHEYP).

In terms of tissue distribution, ubiquitous.

The protein localises to the nucleus. It catalyses the reaction S-ubiquitinyl-[E2 ubiquitin-conjugating enzyme]-L-cysteine + [acceptor protein]-L-lysine = [E2 ubiquitin-conjugating enzyme]-L-cysteine + N(6)-ubiquitinyl-[acceptor protein]-L-lysine.. It participates in protein modification; protein ubiquitination. Its function is as follows. E3 ubiquitin ligase catalyzing the covalent attachment of ubiquitin moieties onto substrate proteins. Acts as a key developmental timer that helps ensure puberty begins at the appropriate age, by inhibiting premature activation of the reproductive hormone cascade. Epigenetically regulates GNRH1 transcription by disrupting the binding of methyl-DNA binding protein 3/MBD3 to the promoter of GNRH1. Mechanistically, mediates the non-proteolytic ubiquitination of MBD3 at multiple sites with 'Lys27' ubiquitin linkages and thereby regulates the methylation status of the genome, including GNRH1 promoter. Modulates the stability and translation of GNRH1 mRNA by mediating the non-proteolytic ubiquitination of PABP family members PABPC1, PABPC3 and PABPC4 at multiple sites. Also participates in the maintenance of genomic and epigenomic stability by regulating the abundance of APEX2 via 'Lys-48'-linked ubiquitination. The protein is E3 ubiquitin-protein ligase makorin-3 (MKRN3) of Homo sapiens (Human).